A 398-amino-acid chain; its full sequence is Argininosuccinate synthase (398 aa).

Residues 9–17 and A37 contribute to the ATP site; that span reads AYSGGVDTS. Y88 serves as a coordination point for L-citrulline. Residue G118 coordinates ATP. Residues T120, N124, and D125 each coordinate L-aspartate. N124 is a binding site for L-citrulline. L-citrulline contacts are provided by R128, S176, S185, E261, and Y273.

Belongs to the argininosuccinate synthase family. Type 1 subfamily. In terms of assembly, homotetramer.

It is found in the cytoplasm. It catalyses the reaction L-citrulline + L-aspartate + ATP = 2-(N(omega)-L-arginino)succinate + AMP + diphosphate + H(+). The protein operates within amino-acid biosynthesis; L-arginine biosynthesis; L-arginine from L-ornithine and carbamoyl phosphate: step 2/3. The polypeptide is Argininosuccinate synthase (Gloeobacter violaceus (strain ATCC 29082 / PCC 7421)).